The following is a 404-amino-acid chain: Immediate early response gene 5-like protein (404 aa).

Disordered regions lie at residues 86-107 (AADF…EPAA), 160-231 (AALQ…APAS), and 308-327 (QEEE…EPPG). Residues 177 to 194 (PLQPGPAPLPLPLPPPAP) are compositionally biased toward pro residues. Low complexity predominate over residues 195–231 (AALCPRDPRAPAACSAPPGAAPPAAAASPPASPAPAS). A compositionally biased stretch (acidic residues) spans 308–318 (QEEEEDDEEDA).

The protein belongs to the IER family.

The polypeptide is Immediate early response gene 5-like protein (IER5L) (Homo sapiens (Human)).